Reading from the N-terminus, the 83-residue chain is Apolipoprotein C-I, basic form (83 aa).

An N-terminal signal peptide occupies residues M1–G26.

It belongs to the apolipoprotein C1 family.

It localises to the secreted. Inhibitor of lipoprotein binding to the low density lipoprotein (LDL) receptor, LDL receptor-related protein, and very low density lipoprotein (VLDL) receptor. Associates with high density lipoproteins (HDL) and the triacylglycerol-rich lipoproteins in the plasma and makes up about 10% of the protein of the VLDL and 2% of that of HDL. Appears to interfere directly with fatty acid uptake and is also the major plasma inhibitor of cholesteryl ester transfer protein (CETP). Binds free fatty acids and reduces their intracellular esterification. Modulates the interaction of APOE with beta-migrating VLDL and inhibits binding of beta-VLDL to the LDL receptor-related protein. The protein is Apolipoprotein C-I, basic form (APOC1B) of Pan troglodytes (Chimpanzee).